A 270-amino-acid polypeptide reads, in one-letter code: Imidazole glycerol phosphate synthase subunit HisF (270 aa).

Catalysis depends on residues D11 and D130.

Belongs to the HisA/HisF family. Heterodimer of HisH and HisF.

The protein localises to the cytoplasm. It carries out the reaction 5-[(5-phospho-1-deoxy-D-ribulos-1-ylimino)methylamino]-1-(5-phospho-beta-D-ribosyl)imidazole-4-carboxamide + L-glutamine = D-erythro-1-(imidazol-4-yl)glycerol 3-phosphate + 5-amino-1-(5-phospho-beta-D-ribosyl)imidazole-4-carboxamide + L-glutamate + H(+). It participates in amino-acid biosynthesis; L-histidine biosynthesis; L-histidine from 5-phospho-alpha-D-ribose 1-diphosphate: step 5/9. Its function is as follows. IGPS catalyzes the conversion of PRFAR and glutamine to IGP, AICAR and glutamate. The HisF subunit catalyzes the cyclization activity that produces IGP and AICAR from PRFAR using the ammonia provided by the HisH subunit. In Chloroflexus aggregans (strain MD-66 / DSM 9485), this protein is Imidazole glycerol phosphate synthase subunit HisF.